The primary structure comprises 141 residues: ATP synthase epsilon chain (141 aa).

Belongs to the ATPase epsilon chain family. In terms of assembly, F-type ATPases have 2 components, CF(1) - the catalytic core - and CF(0) - the membrane proton channel. CF(1) has five subunits: alpha(3), beta(3), gamma(1), delta(1), epsilon(1). CF(0) has three main subunits: a, b and c.

Its subcellular location is the cell inner membrane. Produces ATP from ADP in the presence of a proton gradient across the membrane. This Dechloromonas aromatica (strain RCB) protein is ATP synthase epsilon chain.